We begin with the raw amino-acid sequence, 391 residues long: Probable tRNA sulfurtransferase (391 aa).

Residues 60–167 enclose the THUMP domain; the sequence is DEIIDHIKKV…KDNCYVYTDR (108 aa). ATP contacts are provided by residues 185–186, 210–211, Arg-267, Gly-289, and Gln-298; these read LL and HF.

It belongs to the ThiI family.

It is found in the cytoplasm. It carries out the reaction [ThiI sulfur-carrier protein]-S-sulfanyl-L-cysteine + a uridine in tRNA + 2 reduced [2Fe-2S]-[ferredoxin] + ATP + H(+) = [ThiI sulfur-carrier protein]-L-cysteine + a 4-thiouridine in tRNA + 2 oxidized [2Fe-2S]-[ferredoxin] + AMP + diphosphate. It catalyses the reaction [ThiS sulfur-carrier protein]-C-terminal Gly-Gly-AMP + S-sulfanyl-L-cysteinyl-[cysteine desulfurase] + AH2 = [ThiS sulfur-carrier protein]-C-terminal-Gly-aminoethanethioate + L-cysteinyl-[cysteine desulfurase] + A + AMP + 2 H(+). The protein operates within cofactor biosynthesis; thiamine diphosphate biosynthesis. In terms of biological role, catalyzes the ATP-dependent transfer of a sulfur to tRNA to produce 4-thiouridine in position 8 of tRNAs, which functions as a near-UV photosensor. Also catalyzes the transfer of sulfur to the sulfur carrier protein ThiS, forming ThiS-thiocarboxylate. This is a step in the synthesis of thiazole, in the thiamine biosynthesis pathway. The sulfur is donated as persulfide by IscS. The polypeptide is Probable tRNA sulfurtransferase (Finegoldia magna (strain ATCC 29328 / DSM 20472 / WAL 2508) (Peptostreptococcus magnus)).